A 141-amino-acid chain; its full sequence is Hemoglobin subunit alpha-A (141 aa).

Residues 1–141 (VLSAADKTNV…VGTVLTAKYR (141 aa)) enclose the Globin domain. Residue H58 participates in O2 binding. H87 serves as a coordination point for heme b.

It belongs to the globin family. In terms of assembly, heterotetramer of two alpha chains and two beta chains. In terms of tissue distribution, red blood cells.

Functionally, involved in oxygen transport from the lung to the various peripheral tissues. This is Hemoglobin subunit alpha-A (HBAA) from Branta canadensis (Canada goose).